We begin with the raw amino-acid sequence, 271 residues long: Urease accessory protein UreD (271 aa).

This sequence belongs to the UreD family. UreD, UreF and UreG form a complex that acts as a GTP-hydrolysis-dependent molecular chaperone, activating the urease apoprotein by helping to assemble the nickel containing metallocenter of UreC. The UreE protein probably delivers the nickel.

Its subcellular location is the cytoplasm. In terms of biological role, required for maturation of urease via the functional incorporation of the urease nickel metallocenter. This chain is Urease accessory protein UreD, found in Azorhizobium caulinodans (strain ATCC 43989 / DSM 5975 / JCM 20966 / LMG 6465 / NBRC 14845 / NCIMB 13405 / ORS 571).